Here is a 202-residue protein sequence, read N- to C-terminus: Transmembrane protein 223 (202 aa).

Topologically, residues 1–43 are mitochondrial matrix; that stretch reads MAAPWRRWPTGLLAVLRPLLTCRPLQGTTLQRDVLLFEHDRGR. Residues 44-64 form a helical membrane-spanning segment; that stretch reads FFTILGLFCAGQGVFWASMAV. Residues 65-97 are Mitochondrial intermembrane-facing; sequence AAVSRPPVPVQPLDAEVPNRGPFDLRSALWRYG. A helical transmembrane segment spans residues 98–118; it reads LAVGCGAIGALVLGAGLLFSL. Residues 119–202 are Mitochondrial matrix-facing; that stretch reads RSVRSVVLRA…DNTVGAYRSL (84 aa).

Belongs to the TMEM223 family. In terms of assembly, associates with the mitochondrial ribosome.

The protein localises to the mitochondrion inner membrane. Mitochondrial ribosome-associated protein involved in the first steps of cytochrome c oxidase complex (complex IV) biogenesis. Stimulates the translation of MT-CO1 mRNA and is a constituent of early MT-CO1 assembly intermediates. The sequence is that of Transmembrane protein 223 from Homo sapiens (Human).